Reading from the N-terminus, the 63-residue chain is Male accessory gland serine protease inhibitor (63 aa).

Residues 6 to 62 enclose the BPTI/Kunitz inhibitor domain; it reads CGEPHSLDGSPNGISCRGYFPSWSYNPDAQQCVSFVYGGCGGNNNRFGSQNECEERC. Disulfide bonds link Cys6-Cys62, Cys21-Cys45, and Cys37-Cys58.

Functionally, serine protease inhibitor. This peptide can inhibit, in-vivo, acrosin and, to a lower level, plasma kallikrein. It probably plays a role in Drosophila reproduction. The sequence is that of Male accessory gland serine protease inhibitor (PapD) from Drosophila funebris (Fruit fly).